Here is a 98-residue protein sequence, read N- to C-terminus: Prolactin-releasing peptide (98 aa).

The N-terminal stretch at 1-22 (MKAVGAWLLCLLLLGLALQGAA) is a signal peptide. A Phenylalanine amide modification is found at phenylalanine 53. A propeptide spanning residues 58-98 (AAPGDGPRPGPRRELACIPLEGGAEPSRALLGRLTAQLVQE) is cleaved from the precursor.

As to expression, more abundantly expressed in the brainstem than the hypothalamus.

It localises to the secreted. Its function is as follows. Stimulates prolactin (PRL) release and regulates the expression of prolactin through its receptor GPR10. May stimulate lactotrophs directly to secrete PRL. The chain is Prolactin-releasing peptide (PRLH) from Ovis aries (Sheep).